The following is a 526-amino-acid chain: ATP synthase subunit alpha (526 aa).

171-178 (GDRQTGKT) is a binding site for ATP.

This sequence belongs to the ATPase alpha/beta chains family. F-type ATPases have 2 components, CF(1) - the catalytic core - and CF(0) - the membrane proton channel. CF(1) has five subunits: alpha(3), beta(3), gamma(1), delta(1), epsilon(1). CF(0) has four main subunits: a, b, b' and c.

The protein resides in the cell inner membrane. It carries out the reaction ATP + H2O + 4 H(+)(in) = ADP + phosphate + 5 H(+)(out). Produces ATP from ADP in the presence of a proton gradient across the membrane. The alpha chain is a regulatory subunit. This Pelodictyon phaeoclathratiforme (strain DSM 5477 / BU-1) protein is ATP synthase subunit alpha.